The sequence spans 462 residues: Argininosuccinate lyase (462 aa).

The protein belongs to the lyase 1 family. Argininosuccinate lyase subfamily.

It is found in the cytoplasm. The catalysed reaction is 2-(N(omega)-L-arginino)succinate = fumarate + L-arginine. It participates in amino-acid biosynthesis; L-arginine biosynthesis; L-arginine from L-ornithine and carbamoyl phosphate: step 3/3. In Bacillus mycoides (strain KBAB4) (Bacillus weihenstephanensis), this protein is Argininosuccinate lyase.